Consider the following 559-residue polypeptide: DNA ligase (559 aa).

Glu247 lines the ATP pocket. The N6-AMP-lysine intermediate role is filled by Lys249. The ATP site is built by Arg254, Arg269, Glu299, Phe339, Arg414, and Lys420.

It belongs to the ATP-dependent DNA ligase family. In terms of assembly, monomer. It depends on Mg(2+) as a cofactor.

The enzyme catalyses ATP + (deoxyribonucleotide)n-3'-hydroxyl + 5'-phospho-(deoxyribonucleotide)m = (deoxyribonucleotide)n+m + AMP + diphosphate.. It catalyses the reaction NAD(+) + (deoxyribonucleotide)n-3'-hydroxyl + 5'-phospho-(deoxyribonucleotide)m = (deoxyribonucleotide)n+m + AMP + beta-nicotinamide D-nucleotide.. Its function is as follows. DNA ligase that seals nicks in double-stranded DNA during DNA replication, DNA recombination and DNA repair. Can also use NAD, but less efficiently than ATP. This chain is DNA ligase, found in Thermococcus kodakarensis (strain ATCC BAA-918 / JCM 12380 / KOD1) (Pyrococcus kodakaraensis (strain KOD1)).